The primary structure comprises 186 residues: Ribosome-recycling factor (186 aa).

Belongs to the RRF family.

The protein resides in the cytoplasm. In terms of biological role, responsible for the release of ribosomes from messenger RNA at the termination of protein biosynthesis. May increase the efficiency of translation by recycling ribosomes from one round of translation to another. In Limosilactobacillus reuteri (Lactobacillus reuteri), this protein is Ribosome-recycling factor.